Here is a 913-residue protein sequence, read N- to C-terminus: E3 ubiquitin-protein ligase ZNRF3 (913 aa).

The segment at M1–P32 is disordered. An N-terminal signal peptide occupies residues M1 to A52. The segment covering G13 to R27 has biased composition (basic residues). Topologically, residues K53 to M216 are extracellular. Residues G217–I237 traverse the membrane as a helical segment. At K238–A913 the chain is on the cytoplasmic side. An RING-type; atypical zinc finger spans residues C290–R331. 2 disordered regions span residues A601–V669 and R855–A913. 2 stretches are compositionally biased toward polar residues: residues S634–E664 and A881–T890. Residues P903–A913 show a composition bias toward gly residues.

It belongs to the ZNRF3 family. In terms of assembly, interacts with LRP6, FZD4, FZD5, FZD6 and FZD8. Interacts with RSPO1; interaction promotes indirect interaction with LGR4 and membrane clearance of ZNRF3. Interacts with LMBR1L.

Its subcellular location is the cell membrane. It carries out the reaction S-ubiquitinyl-[E2 ubiquitin-conjugating enzyme]-L-cysteine + [acceptor protein]-L-lysine = [E2 ubiquitin-conjugating enzyme]-L-cysteine + N(6)-ubiquitinyl-[acceptor protein]-L-lysine.. The protein operates within protein modification; protein ubiquitination. Negatively regulated by R-spondin proteins such as RSPO1: interaction with RSPO1 induces the indirect association between ZNRF3 and LGR4, promoting membrane clearance of ZNRF3. In terms of biological role, E3 ubiquitin-protein ligase that acts as a negative regulator of the Wnt signaling pathway by mediating the ubiquitination and subsequent degradation of Wnt receptor complex components Frizzled and LRP6. Acts on both canonical and non-canonical Wnt signaling pathway. Acts as a tumor suppressor in the intestinal stem cell zone by inhibiting the Wnt signaling pathway, thereby restricting the size of the intestinal stem cell zone. Along with RSPO2 and RNF43, constitutes a master switch that governs limb specification. The chain is E3 ubiquitin-protein ligase ZNRF3 (Znrf3) from Mus musculus (Mouse).